A 145-amino-acid polypeptide reads, in one-letter code: MHPAHLLVLLAVCVSLLGASDIPPLPLNLVQFGKMIECAIRNRRPALDFMNYGCYCGKGGSGTPVDDLDRCCQVHDECYAEAEKHGCYPSLTTYTWECRQVGPYCNSKTQCEVFVCACDFAAAKCFAQEDYNPAHSNINTGERCK.

Positions 1–27 are cleaved as a signal peptide; the sequence is MHPAHLLVLLAVCVSLLGASDIPPLPL. Intrachain disulfides connect cysteine 38–cysteine 98, cysteine 54–cysteine 144, cysteine 56–cysteine 72, cysteine 71–cysteine 125, cysteine 78–cysteine 118, cysteine 87–cysteine 111, and cysteine 105–cysteine 116.

This sequence belongs to the phospholipase A2 family. Group I subfamily. D49 sub-subfamily. In terms of assembly, heterotrimer of alpha, beta, and gamma chains; non-covalently linked. As to expression, expressed by the venom gland.

The protein resides in the secreted. In terms of biological role, heterotrimer: Snake venom phospholipase A2 (PLA2) heterotrimer that acts as a potent presynaptic neurotoxin by blocking synaptic transmission and synaptic vesicle recycling. May act by binding in a calcium-dependent fashion to neurotonal pentraxin-1 (NPTX1) and neurotonal pentraxin-2 (NPTX2), but not to neuronal pentraxin receptor (NPTXR). Also binds to taipoxin-associated calcium binding protein 49 (RCN2), a protein localized in the lumen of endoplasmic reticulum. Monomer (beta chain): Snake venom phospholipase A2 homolog that is neither toxic nor enzymatically active. Does not bind calcium. In Oxyuranus scutellatus scutellatus (Australian taipan), this protein is Neutral phospholipase A2 homolog taipoxin beta chain 1.